We begin with the raw amino-acid sequence, 1097 residues long: MAGYGHSTAGGFGSGSGSGPPGPQYMLPQYDEGDDPDADATPAGQGVRLLTNLDNSSYISVSEITSQSSHRDNIRPSRLRQAYEPSIDARTYEPSLDTRTYEPSISDRRHMYEPSIDERSSYMDPPRIPPPDGGSYVSSYMGTESMVSGHGRPWSPESATGYRVPPQGRYEPSEIDGHARPGTPGSSYGNARRPLPSAPAPLHYNSPSRAASHYPRYHGGYADDVTVSMGPDDDRTDIFGPETDLSETRHLNDAYGFRSSQITLSEDPHGTHARSRYDDEDDVSTTYSSNTGTSASGVDKFEHYGPIPEEGKHERRGVRPPQMSRKEVQLINGELVLECKIPTILYSFLPRRDEVEFTHMRYTAVTCDPDDFVARGYKLRQNIGRTARETELFICVTMYNEDEFGFTRTMHAVMKNISHFCSRNKSRTWGADGWQKIVVCVVSDGREIIHPRTLDALAAMGVYQHGIAKNFVNQKAVQAHVYEYTTQVSLDSDLKFKGAEKGIVPCQMIFCLKEKNQKKLNSHRWFFNAFGKALNPNVCILLDVGTRPGGTSLYHLWKAFDTDSNVAGACGEIKAMKGRFGGNLLNPLVASQNFEYKMSNILDKPLESVFGYITVLPGALSAYRYHALQNDETGHGPLSQYFKGETLHGQHADVFTANMYLAEDRILCWELVAKRGERWVLKYVKGCTGETDVPDTVPEFVSQRRRWLNGAFFAAVYSLVHFRQIWKTDHTFMRKALLHVEFLYHLLQLLFTYFSLANFYLAFYFIAGGLADPHVDPFNSDGHVARIIFNILRYVCVLLICTQFILSLGNRPQGAKRMYLASMIIYAVIMVYTTFATIFIVVRQIQPSQKSDDKPDLELGNNVFTNLIVSVASTLGLYFVMSFLYLDPWHMFTSAIQYFVLLPSYICTLQIYAFCNTHDVTWGTKGDNVMRTDLGGAIGKGSTVELEMPSDQLDIDSGYDECLRNLRDRVMVPAVPVSEDQLQQDYYKSVRTYMVVSWMVANATLAMAVSEAYGDSEIGDNFYLRFILWAVAALALFRALGSTTFAAINLVSALVEGRVRLRLNMKGFRWIKEKWGDADVKGKFEGLGDRARGLARR.

Residues 1–46 (MAGYGHSTAGGFGSGSGSGPPGPQYMLPQYDEGDDPDADATPAGQG) are disordered. Over 1–748 (MAGYGHSTAG…HVEFLYHLLQ (748 aa)) the chain is Extracellular. Residues 8-19 (TAGGFGSGSGSG) are compositionally biased toward gly residues. The N-linked (GlcNAc...) asparagine glycan is linked to Asn55. 2 disordered regions span residues 148-217 (SGHG…YPRY) and 259-322 (SSQI…RPPQ). Polar residues predominate over residues 284–296 (STTYSSNTGTSAS). Residues 299–313 (DKFEHYGPIPEEGKH) are compositionally biased toward basic and acidic residues. 2 N-linked (GlcNAc...) asparagine glycosylation sites follow: Asn416 and Asn424. The helical transmembrane segment at 749-769 (LLFTYFSLANFYLAFYFIAGG) threads the bilayer. Over 770 to 786 (LADPHVDPFNSDGHVAR) the chain is Cytoplasmic. The helical transmembrane segment at 787 to 807 (IIFNILRYVCVLLICTQFILS) threads the bilayer. At 808-821 (LGNRPQGAKRMYLA) the chain is on the extracellular side. A helical membrane pass occupies residues 822-842 (SMIIYAVIMVYTTFATIFIVV). Residues 843 to 865 (RQIQPSQKSDDKPDLELGNNVFT) are Cytoplasmic-facing. Residues 866–886 (NLIVSVASTLGLYFVMSFLYL) traverse the membrane as a helical segment. Residues 887 to 894 (DPWHMFTS) lie on the Extracellular side of the membrane. Residues 895–915 (AIQYFVLLPSYICTLQIYAFC) traverse the membrane as a helical segment. At 916–993 (NTHDVTWGTK…QDYYKSVRTY (78 aa)) the chain is on the cytoplasmic side. A helical membrane pass occupies residues 994-1014 (MVVSWMVANATLAMAVSEAYG). The Extracellular segment spans residues 1015–1025 (DSEIGDNFYLR). Residues 1026–1046 (FILWAVAALALFRALGSTTFA) form a helical membrane-spanning segment. Over 1047–1097 (AINLVSALVEGRVRLRLNMKGFRWIKEKWGDADVKGKFEGLGDRARGLARR) the chain is Cytoplasmic.

The protein belongs to the chitin synthase family.

It localises to the cell membrane. The enzyme catalyses [(1-&gt;4)-N-acetyl-beta-D-glucosaminyl](n) + UDP-N-acetyl-alpha-D-glucosamine = [(1-&gt;4)-N-acetyl-beta-D-glucosaminyl](n+1) + UDP + H(+). Its function is as follows. Polymerizes chitin, a structural polymer of the cell wall and septum, by transferring the sugar moiety of UDP-GlcNAc to the non-reducing end of the growing chitin polymer. This chain is Chitin synthase 2 (chs-2), found in Neurospora crassa (strain ATCC 24698 / 74-OR23-1A / CBS 708.71 / DSM 1257 / FGSC 987).